Consider the following 896-residue polypeptide: DNA mismatch repair protein MutS (896 aa).

607–614 (GPNMSGKS) is a binding site for ATP. The segment at 809 to 835 (ANSVAPNTAASMPVEAADESQPVESET) is disordered.

It belongs to the DNA mismatch repair MutS family.

Functionally, this protein is involved in the repair of mismatches in DNA. It is possible that it carries out the mismatch recognition step. This protein has a weak ATPase activity. This is DNA mismatch repair protein MutS from Lactiplantibacillus plantarum (strain ATCC BAA-793 / NCIMB 8826 / WCFS1) (Lactobacillus plantarum).